A 123-amino-acid chain; its full sequence is MSPTGFFLLTVLLVLVTEAASRGPREKFSQSAEDPYSENMNLKILASGRGSSSTFGAFSRSENSRSNFKSKSPSSITREKVNEESRSEMSSTSSHFGLKMRRSHGGGEMNPFETKVKTRITRK.

Positions 1 to 21 (MSPTGFFLLTVLLVLVTEAAS) are cleaved as a signal peptide. The tract at residues 50-123 (GSSSTFGAFS…TKVKTRITRK (74 aa)) is disordered. Over residues 64–75 (SRSNFKSKSPSS) the composition is skewed to low complexity. A compositionally biased stretch (basic and acidic residues) spans 77–87 (TREKVNEESRS).

The protein belongs to the SVP2/SVP5/SVP6 family. As to expression, testis.

The protein localises to the secreted. The protein resides in the extracellular space. In Rattus norvegicus (Rat), this protein is Seminal vesicle secretory protein 5 (Svs5).